The sequence spans 50 residues: Protein PndA (50 aa).

Residues 5–25 traverse the membrane as a helical segment; the sequence is TFLMMLIVICVTILCFVWMVR.

The protein belongs to the Hok/Gef family.

It is found in the cell inner membrane. In terms of biological role, toxic component of a type I toxin-antitoxin (TA) system. When expressed is involved in cellular Mg(2+) release and degradation of stable RNA. This is Protein PndA (pndA) from Escherichia coli.